Consider the following 581-residue polypeptide: Trehalase (581 aa).

The protein belongs to the glycosyl hydrolase 15 family. As to quaternary structure, monomer.

It carries out the reaction alpha,alpha-trehalose + H2O = alpha-D-glucose + beta-D-glucose. It participates in glycan degradation; trehalose degradation; D-glucose from alpha,alpha-trehalose: step 1/1. Inhibited by validamycin A. Catalyzes the hydrolysis of alpha,alpha-trehalose into two molecules of D-glucose. This is Trehalase from Thermoplasma acidophilum (strain ATCC 25905 / DSM 1728 / JCM 9062 / NBRC 15155 / AMRC-C165).